A 443-amino-acid chain; its full sequence is CBL-interacting protein kinase 29 (443 aa).

One can recognise a Protein kinase domain in the interval 32-292; the sequence is YELGGLLGRG…TEEIITHPWF (261 aa). ATP-binding positions include 38 to 46 and lysine 61; that span reads LGRGASAKV. Catalysis depends on aspartate 164, which acts as the Proton acceptor. The tract at residues 182-207 is activation loop; it reads DFGLGAVADGALHHTLCGTPAYVAPE. Positions 313 to 347 constitute an NAF domain; that stretch reads AKFKTEFKEDDMARDMTAFDILACSPGSDLSGLFG. The tract at residues 350 to 379 is PPI; that stretch reads PGKERVFVGEPAAAVLSRVEEAGKKEGYMV.

It belongs to the protein kinase superfamily. CAMK Ser/Thr protein kinase family. SNF1 subfamily. Requires Mn(2+) as cofactor.

The catalysed reaction is L-seryl-[protein] + ATP = O-phospho-L-seryl-[protein] + ADP + H(+). It catalyses the reaction L-threonyl-[protein] + ATP = O-phospho-L-threonyl-[protein] + ADP + H(+). Its function is as follows. CIPK serine-threonine protein kinases interact with CBL proteins. Binding of a CBL protein to the regulatory NAF domain of CIPK protein lead to the activation of the kinase in a calcium-dependent manner. The protein is CBL-interacting protein kinase 29 (CIPK29) of Oryza sativa subsp. japonica (Rice).